A 1295-amino-acid chain; its full sequence is Phosphoribosylformylglycinamidine synthase (1295 aa).

Residues 305 to 327 (WPGAATGSGGEIRDEGATGRGAK) form a disordered region. ATP-binding positions include 307 to 318 (GAATGSGGEIRD) and Ala678. The Mg(2+) site is built by Glu718, Asn722, and Asp884. Ser886 is an ATP binding site. Residues 1042-1295 (VAVLREQGVN…IFRNARKQLG (254 aa)) form the Glutamine amidotransferase type-1 domain. The active-site Nucleophile is the Cys1135. Active-site residues include His1260 and Glu1262.

In the N-terminal section; belongs to the FGAMS family. In terms of assembly, monomer.

The protein localises to the cytoplasm. It carries out the reaction N(2)-formyl-N(1)-(5-phospho-beta-D-ribosyl)glycinamide + L-glutamine + ATP + H2O = 2-formamido-N(1)-(5-O-phospho-beta-D-ribosyl)acetamidine + L-glutamate + ADP + phosphate + H(+). It functions in the pathway purine metabolism; IMP biosynthesis via de novo pathway; 5-amino-1-(5-phospho-D-ribosyl)imidazole from N(2)-formyl-N(1)-(5-phospho-D-ribosyl)glycinamide: step 1/2. Functionally, phosphoribosylformylglycinamidine synthase involved in the purines biosynthetic pathway. Catalyzes the ATP-dependent conversion of formylglycinamide ribonucleotide (FGAR) and glutamine to yield formylglycinamidine ribonucleotide (FGAM) and glutamate. The sequence is that of Phosphoribosylformylglycinamidine synthase from Escherichia coli (strain UTI89 / UPEC).